The primary structure comprises 80 residues: Putative membrane protein insertion efficiency factor (80 aa).

Belongs to the UPF0161 family.

It is found in the cell inner membrane. Its function is as follows. Could be involved in insertion of integral membrane proteins into the membrane. In Paracoccus denitrificans (strain Pd 1222), this protein is Putative membrane protein insertion efficiency factor.